The chain runs to 496 residues: Probable malate:quinone oxidoreductase (496 aa).

This sequence belongs to the MQO family. It depends on FAD as a cofactor.

The catalysed reaction is (S)-malate + a quinone = a quinol + oxaloacetate. It participates in carbohydrate metabolism; tricarboxylic acid cycle; oxaloacetate from (S)-malate (quinone route): step 1/1. The sequence is that of Probable malate:quinone oxidoreductase from Prochlorococcus marinus (strain MIT 9303).